We begin with the raw amino-acid sequence, 194 residues long: MIRRVKREIRVIGFDDGTFPHKKRGEKVILVGIVMKGGSDVLGAVSRWITIDGLDVTEAIIDSILSSRFRGDLRVILLKGITYAGFNVVDVNRVFRETGLPLIVVVRKRPDFEAIENALRKHFEDWEKRMELIKAGGKIYELIPGKVYYQAIGIDAETAAKIIRATSRNSLIPEALRIAHIVASAVMRGESSKE.

It belongs to the UPF0215 family.

This Pyrococcus furiosus (strain ATCC 43587 / DSM 3638 / JCM 8422 / Vc1) protein is UPF0215 protein PF2042.